Consider the following 65-residue polypeptide: Large ribosomal subunit protein bL35 (65 aa).

This sequence belongs to the bacterial ribosomal protein bL35 family.

The polypeptide is Large ribosomal subunit protein bL35 (Yersinia enterocolitica serotype O:8 / biotype 1B (strain NCTC 13174 / 8081)).